Reading from the N-terminus, the 567-residue chain is Organic cation transporter-like protein (567 aa).

Over 1–21 (MGYDEAIIHLGDFGRYQKIIY) the chain is Cytoplasmic. The helical transmembrane segment at 22-42 (FLICLTSIPVAFHKLAGVFLL) threads the bilayer. Over 43-127 (AKPDFRCALP…TEWNLVCGRD (85 aa)) the chain is Extracellular. Residues N55, N67, N89, and N97 are each glycosylated (N-linked (GlcNAc...) asparagine). A helical membrane pass occupies residues 128 to 148 (FMAATSDSLFMLGVLLGSIVF). The Cytoplasmic portion of the chain corresponds to 149–158 (GQLSDKYGRK). The chain crosses the membrane as a helical span at residues 159–179 (PILFASLVIQVLFGVLAGVAP). The Extracellular portion of the chain corresponds to 180 to 189 (EYFTYTFARL). A helical membrane pass occupies residues 190 to 210 (MVGATTSGVFLVAYVVAMEMV). Over 211 to 219 (GPDKRLYAG) the chain is Cytoplasmic. The chain crosses the membrane as a helical span at residues 220–240 (IFVMMFFSVGFMLTAVFAYFV). At 241-244 (HDWR) the chain is on the extracellular side. A helical transmembrane segment spans residues 245-265 (WLQIALTLPGLIFMFYYWIIP). Topologically, residues 266-343 (ESARWLLLKG…LFCYPNLRRK (78 aa)) are cytoplasmic. The interval 304–326 (LDEGENSEEKAKQKLEDQELDEG) is disordered. Residues 310–320 (SEEKAKQKLED) show a composition bias toward basic and acidic residues. Residues 344-364 (TLLIFLDWLVTSGVYYGLSWN) form a helical membrane-spanning segment. Over 365-371 (TSNLGGN) the chain is Extracellular. The helical transmembrane segment at 372 to 392 (VLLNFVISGAVEIPAYIFLLL) threads the bilayer. The Cytoplasmic segment spans residues 393 to 400 (TLNRWGRR). Residues 401–421 (SILCGCLVMAGLSLLATVIIP) traverse the membrane as a helical segment. Over 422-427 (QRMHTL) the chain is Extracellular. The chain crosses the membrane as a helical span at residues 428-448 (IVACAMLGKLAITASYGTVYI). Over 449 to 462 (FSAEQFPTVVRNVA) the chain is Cytoplasmic. Residues 463–483 (LGAASMVARISGMMAPFLNFL) form a helical membrane-spanning segment. Topologically, residues 484–489 (ATIWKP) are extracellular. A helical membrane pass occupies residues 490 to 510 (LPLLICGSLTLVAGLLSLLLP). Over 511–567 (ETHNKPMLETIADGERFGKKTKADVYLETGQELRAPEAQPLKGSGETNGSTIANGHK) the chain is Cytoplasmic. Residues 546 to 567 (PEAQPLKGSGETNGSTIANGHK) are disordered. The span at 555–567 (GETNGSTIANGHK) shows a compositional bias: polar residues.

Belongs to the major facilitator (TC 2.A.1) superfamily. Organic cation transporter (TC 2.A.1.19) family.

It is found in the membrane. Probably transports organic cations. This is Organic cation transporter-like protein (Orct2) from Drosophila melanogaster (Fruit fly).